A 688-amino-acid chain; its full sequence is Glycine--tRNA ligase beta subunit (688 aa).

The protein belongs to the class-II aminoacyl-tRNA synthetase family. In terms of assembly, tetramer of two alpha and two beta subunits.

It localises to the cytoplasm. It carries out the reaction tRNA(Gly) + glycine + ATP = glycyl-tRNA(Gly) + AMP + diphosphate. This Shewanella oneidensis (strain ATCC 700550 / JCM 31522 / CIP 106686 / LMG 19005 / NCIMB 14063 / MR-1) protein is Glycine--tRNA ligase beta subunit.